A 144-amino-acid chain; its full sequence is tRNA-specific adenosine deaminase (144 aa).

The CMP/dCMP-type deaminase domain occupies 1–116 (MEQALKQAGI…SNLRYFNSSV (116 aa)). His-48 serves as a coordination point for Zn(2+). Glu-50 serves as the catalytic Proton donor. Cys-78 and Cys-81 together coordinate Zn(2+).

Belongs to the cytidine and deoxycytidylate deaminase family. Homodimer. Zn(2+) is required as a cofactor.

It catalyses the reaction adenosine(34) in tRNA + H2O + H(+) = inosine(34) in tRNA + NH4(+). Its function is as follows. Catalyzes the deamination of adenosine to inosine at the wobble position 34 of tRNA(Arg2). The chain is tRNA-specific adenosine deaminase from Rickettsia felis (strain ATCC VR-1525 / URRWXCal2) (Rickettsia azadi).